We begin with the raw amino-acid sequence, 122 residues long: UPF0102 protein VCM66_0538 (122 aa).

Belongs to the UPF0102 family.

In Vibrio cholerae serotype O1 (strain M66-2), this protein is UPF0102 protein VCM66_0538.